A 316-amino-acid polypeptide reads, in one-letter code: Ribose-phosphate pyrophosphokinase (316 aa).

ATP contacts are provided by residues 41-43 (DGE) and 100-101 (RQ). 2 residues coordinate Mg(2+): His134 and Asp175. Lys198 is a catalytic residue. Residues Arg200, Asp224, and 228–232 (DTARS) contribute to the D-ribose 5-phosphate site.

The protein belongs to the ribose-phosphate pyrophosphokinase family. Class I subfamily. Homohexamer. Mg(2+) serves as cofactor.

The protein localises to the cytoplasm. It catalyses the reaction D-ribose 5-phosphate + ATP = 5-phospho-alpha-D-ribose 1-diphosphate + AMP + H(+). It participates in metabolic intermediate biosynthesis; 5-phospho-alpha-D-ribose 1-diphosphate biosynthesis; 5-phospho-alpha-D-ribose 1-diphosphate from D-ribose 5-phosphate (route I): step 1/1. Functionally, involved in the biosynthesis of the central metabolite phospho-alpha-D-ribosyl-1-pyrophosphate (PRPP) via the transfer of pyrophosphoryl group from ATP to 1-hydroxyl of ribose-5-phosphate (Rib-5-P). The polypeptide is Ribose-phosphate pyrophosphokinase (Thermosipho africanus (strain TCF52B)).